Reading from the N-terminus, the 847-residue chain is Beta-hexosaminidase (847 aa).

Cystine bridges form between Cys31–Cys40, Cys377–Cys385, and Cys484–Cys530. Glu519 functions as the Proton donor in the catalytic mechanism.

It belongs to the glycosyl hydrolase 20 family.

The enzyme catalyses Hydrolysis of terminal non-reducing N-acetyl-D-hexosamine residues in N-acetyl-beta-D-hexosaminides.. It functions in the pathway glycan degradation; chitin degradation. In terms of biological role, hydrolysis of terminal, non-reducing N-acetyl-beta-D-glucosamine residues in chitobiose and higher analogs, and in glycoproteins. This is Beta-hexosaminidase (hex) from Vibrio vulnificus.